We begin with the raw amino-acid sequence, 617 residues long: V-type proton ATPase catalytic subunit A (617 aa).

Thr-136 carries the phosphothreonine modification. ATP is bound at residue 250 to 257 (GAFGCGKT). Position 384 is a phosphoserine; by AMPK (Ser-384).

The protein belongs to the ATPase alpha/beta chains family. In terms of assembly, V-ATPase is a heteromultimeric enzyme made up of two complexes: the ATP-hydrolytic V1 complex and the proton translocation V0 complex. The V1 complex consists of three catalytic AB heterodimers that form a heterohexamer, three peripheral stalks each consisting of EG heterodimers, one central rotor including subunits D and F, and the regulatory subunits C and H. The proton translocation complex V0 consists of the proton transport subunit a, a ring of proteolipid subunits c9c'', rotary subunit d, subunits e and f, and the accessory subunits ATP6AP1/Ac45 and ATP6AP2/PRR. Interacts with the V0 complex V-ATPase subunit a4 ATP6V0A4. Interacts with WFS1. Interacts with alpha-crystallin B chain/CRYAB and with MTOR, forming a ternary complex. In terms of processing, phosphorylation at Ser-384 by AMPK down-regulates its enzyme activity.

It localises to the cytoplasm. It is found in the cytosol. The protein localises to the cytoplasmic vesicle. Its subcellular location is the secretory vesicle. The protein resides in the clathrin-coated vesicle membrane. It localises to the lysosome. The catalysed reaction is ATP + H2O + 4 H(+)(in) = ADP + phosphate + 5 H(+)(out). Its activity is regulated as follows. ATP hydrolysis occurs at the interface between the nucleotide-binding domains of subunits A and B. ATP hydrolysis triggers a conformational change in the subunits D and F, which induces a shift of subunit d. The c-ring is subsequently rotated and results in a continuous proton translocation across the membrane. Catalytic subunit of the V1 complex of vacuolar(H+)-ATPase (V-ATPase), a multisubunit enzyme composed of a peripheral complex (V1) that hydrolyzes ATP and a membrane integral complex (V0) that translocates protons. V-ATPase is responsible for acidifying and maintaining the pH of intracellular compartments and in some cell types, is targeted to the plasma membrane, where it is responsible for acidifying the extracellular environment. In aerobic conditions, involved in intracellular iron homeostasis, thus triggering the activity of Fe(2+) prolyl hydroxylase (PHD) enzymes, and leading to HIF1A hydroxylation and subsequent proteasomal degradation. May play a role in neurite development and synaptic connectivity. The sequence is that of V-type proton ATPase catalytic subunit A (ATP6V1A) from Pongo abelii (Sumatran orangutan).